The chain runs to 115 residues: Large ribosomal subunit protein bL20 (115 aa).

Belongs to the bacterial ribosomal protein bL20 family.

Functionally, binds directly to 23S ribosomal RNA and is necessary for the in vitro assembly process of the 50S ribosomal subunit. It is not involved in the protein synthesizing functions of that subunit. The sequence is that of Large ribosomal subunit protein bL20 from Synechococcus sp. (strain RCC307).